Reading from the N-terminus, the 383-residue chain is MSVTAAQGFTASGIAAGIKENGNPDLALVVNNGPRLAAAGVFTSNRVKAAPVLWSEQVLKGGVVSAVVLNSGGANACTGPKGFQDTHATAEKVAETLDLNAGEVAVASTGLIGVLLPMDKLLPGVERAVAGLSEHGGEKAAIAIKTTDTVHKTSVVTKDGWTVGGMAKGAGMLAPGLATMLVVLTTDADLDRDALDRALRAATRTTFDRVDSDGCMSTNDTVLLLASGASEVTPKQEEFAEAVRAVCDDLGQQLIQDAEGASKDIKVEVVGAATEDDAVEVGRSIARNNLLKCAIHGEDPNWGRVLSAIGTTRAAFEPDQLNVAINGVWVCKKGGVGEDRDLVDMRYREVHIVADLAAGTETATIWTNDLTADYVHENSAYSS.

Residues Thr146, Lys168, Thr179, Glu259, Asn378, and Ser383 each coordinate substrate. The active-site Nucleophile is Thr179.

Belongs to the ArgJ family. Heterotetramer of two alpha and two beta chains.

It localises to the cytoplasm. It carries out the reaction N(2)-acetyl-L-ornithine + L-glutamate = N-acetyl-L-glutamate + L-ornithine. The enzyme catalyses L-glutamate + acetyl-CoA = N-acetyl-L-glutamate + CoA + H(+). Its pathway is amino-acid biosynthesis; L-arginine biosynthesis; L-ornithine and N-acetyl-L-glutamate from L-glutamate and N(2)-acetyl-L-ornithine (cyclic): step 1/1. It functions in the pathway amino-acid biosynthesis; L-arginine biosynthesis; N(2)-acetyl-L-ornithine from L-glutamate: step 1/4. In terms of biological role, catalyzes two activities which are involved in the cyclic version of arginine biosynthesis: the synthesis of N-acetylglutamate from glutamate and acetyl-CoA as the acetyl donor, and of ornithine by transacetylation between N(2)-acetylornithine and glutamate. This Streptomyces avermitilis (strain ATCC 31267 / DSM 46492 / JCM 5070 / NBRC 14893 / NCIMB 12804 / NRRL 8165 / MA-4680) protein is Arginine biosynthesis bifunctional protein ArgJ.